A 465-amino-acid polypeptide reads, in one-letter code: Kynurenine 3-monooxygenase (465 aa).

Residues 1 to 26 (MSPGIVSQEVNGRQEPTEAARDERHG) are disordered. A compositionally biased stretch (basic and acidic residues) spans 15–25 (EPTEAARDERH). 2 helical membrane-spanning segments follow: residues 405–427 (LLFRLFPGWIPLYNSVSFSSMPY) and 440–462 (LLKRIFGATFLAAIVTGGAIYAQ).

Belongs to the aromatic-ring hydroxylase family. KMO subfamily. Requires FAD as cofactor.

The protein resides in the mitochondrion. It is found in the membrane. The catalysed reaction is L-kynurenine + NADPH + O2 + H(+) = 3-hydroxy-L-kynurenine + NADP(+) + H2O. Its pathway is cofactor biosynthesis; NAD(+) biosynthesis; quinolinate from L-kynurenine: step 1/3. In terms of biological role, catalyzes the hydroxylation of L-kynurenine (L-Kyn) to form 3-hydroxy-L-kynurenine (L-3OHKyn). Required for synthesis of quinolinic acid. This is Kynurenine 3-monooxygenase from Drosophila melanogaster (Fruit fly).